A 193-amino-acid chain; its full sequence is GTP cyclohydrolase 1 (193 aa).

Zn(2+) contacts are provided by C73, H76, and C144.

The protein belongs to the GTP cyclohydrolase I family. As to quaternary structure, homomer.

The catalysed reaction is GTP + H2O = 7,8-dihydroneopterin 3'-triphosphate + formate + H(+). It functions in the pathway cofactor biosynthesis; 7,8-dihydroneopterin triphosphate biosynthesis; 7,8-dihydroneopterin triphosphate from GTP: step 1/1. The chain is GTP cyclohydrolase 1 from Hyperthermus butylicus (strain DSM 5456 / JCM 9403 / PLM1-5).